We begin with the raw amino-acid sequence, 264 residues long: Thiazole synthase (264 aa).

The active-site Schiff-base intermediate with DXP is Lys-106. Residues Gly-167, 193-194, and 215-216 each bind 1-deoxy-D-xylulose 5-phosphate; these read AG and NS.

It belongs to the ThiG family. As to quaternary structure, homotetramer. Forms heterodimers with either ThiH or ThiS.

Its subcellular location is the cytoplasm. It carries out the reaction [ThiS sulfur-carrier protein]-C-terminal-Gly-aminoethanethioate + 2-iminoacetate + 1-deoxy-D-xylulose 5-phosphate = [ThiS sulfur-carrier protein]-C-terminal Gly-Gly + 2-[(2R,5Z)-2-carboxy-4-methylthiazol-5(2H)-ylidene]ethyl phosphate + 2 H2O + H(+). The protein operates within cofactor biosynthesis; thiamine diphosphate biosynthesis. Functionally, catalyzes the rearrangement of 1-deoxy-D-xylulose 5-phosphate (DXP) to produce the thiazole phosphate moiety of thiamine. Sulfur is provided by the thiocarboxylate moiety of the carrier protein ThiS. In vitro, sulfur can be provided by H(2)S. In Pseudomonas savastanoi pv. phaseolicola (strain 1448A / Race 6) (Pseudomonas syringae pv. phaseolicola (strain 1448A / Race 6)), this protein is Thiazole synthase.